A 126-amino-acid polypeptide reads, in one-letter code: Large ribosomal subunit protein bL20 (126 aa).

This sequence belongs to the bacterial ribosomal protein bL20 family.

In terms of biological role, binds directly to 23S ribosomal RNA and is necessary for the in vitro assembly process of the 50S ribosomal subunit. It is not involved in the protein synthesizing functions of that subunit. The polypeptide is Large ribosomal subunit protein bL20 (Nocardia farcinica (strain IFM 10152)).